A 353-amino-acid polypeptide reads, in one-letter code: DNA polymerase IV (353 aa).

One can recognise a UmuC domain in the interval 6–187 (IIHIDCDCFY…LPVTKLHGVG (182 aa)). Residues D10 and D105 each coordinate Mg(2+). Residue E106 is part of the active site.

This sequence belongs to the DNA polymerase type-Y family. In terms of assembly, monomer. Mg(2+) is required as a cofactor.

It is found in the cytoplasm. The catalysed reaction is DNA(n) + a 2'-deoxyribonucleoside 5'-triphosphate = DNA(n+1) + diphosphate. Functionally, poorly processive, error-prone DNA polymerase involved in untargeted mutagenesis. Copies undamaged DNA at stalled replication forks, which arise in vivo from mismatched or misaligned primer ends. These misaligned primers can be extended by PolIV. Exhibits no 3'-5' exonuclease (proofreading) activity. May be involved in translesional synthesis, in conjunction with the beta clamp from PolIII. The sequence is that of DNA polymerase IV from Pseudomonas savastanoi pv. phaseolicola (strain 1448A / Race 6) (Pseudomonas syringae pv. phaseolicola (strain 1448A / Race 6)).